The primary structure comprises 490 residues: ATP synthase subunit beta, chloroplastic (490 aa).

170 to 177 is an ATP binding site; it reads GGAGVGKT.

It belongs to the ATPase alpha/beta chains family. In terms of assembly, F-type ATPases have 2 components, CF(1) - the catalytic core - and CF(0) - the membrane proton channel. CF(1) has five subunits: alpha(3), beta(3), gamma(1), delta(1), epsilon(1). CF(0) has four main subunits: a(1), b(1), b'(1) and c(9-12).

The protein resides in the plastid. The protein localises to the chloroplast thylakoid membrane. It catalyses the reaction ATP + H2O + 4 H(+)(in) = ADP + phosphate + 5 H(+)(out). Functionally, produces ATP from ADP in the presence of a proton gradient across the membrane. The catalytic sites are hosted primarily by the beta subunits. The chain is ATP synthase subunit beta, chloroplastic from Convolvulus arvensis (Field bindweed).